Consider the following 426-residue polypeptide: N-formyl-4-amino-5-aminomethyl-2-methylpyrimidine deformylase (426 aa).

A coiled-coil region spans residues 1–31 (MDQQIYSLQKKVEEHKEELIQLAKTLISYQT). His-89 provides a ligand contact to Zn(2+). The active site involves Asp-91. Asp-122 is a binding site for Zn(2+). Glu-156 acts as the Proton acceptor in catalysis. Positions 157, 180, and 394 each coordinate Zn(2+).

It belongs to the peptidase M20A family. The cofactor is Zn(2+). It depends on Co(2+) as a cofactor.

The enzyme catalyses N-formyl-4-amino-5-aminomethyl-2-methylpyrimidine + H2O = 4-amino-5-aminomethyl-2-methylpyrimidine + formate. Its pathway is cofactor biosynthesis; thiamine diphosphate biosynthesis. Its function is as follows. Catalyzes the deformylation of the formylaminopyrimidine N-formyl-4-amino-5-aminomethyl-2-methylpyrimidine (FAMP) to give the corresponding aminopyrimidine. This is N-formyl-4-amino-5-aminomethyl-2-methylpyrimidine deformylase from Bacillus subtilis (strain 168).